We begin with the raw amino-acid sequence, 440 residues long: 23S rRNA (uracil(1939)-C(5))-methyltransferase RlmD (440 aa).

Residues 10–68 enclose the TRAM domain; it reads KSTQPQRIEFTVDSLDHHCVGIGRHQGKAIFIEGALPGELVKARILEDKKQYAHAALQQ. Positions 81, 87, 90, and 169 each coordinate [4Fe-4S] cluster. S-adenosyl-L-methionine is bound by residues glutamine 273, phenylalanine 302, asparagine 307, glutamate 323, aspartate 350, and aspartate 371. The active-site Nucleophile is cysteine 397.

It belongs to the class I-like SAM-binding methyltransferase superfamily. RNA M5U methyltransferase family. RlmD subfamily.

The catalysed reaction is uridine(1939) in 23S rRNA + S-adenosyl-L-methionine = 5-methyluridine(1939) in 23S rRNA + S-adenosyl-L-homocysteine + H(+). Functionally, catalyzes the formation of 5-methyl-uridine at position 1939 (m5U1939) in 23S rRNA. This Aeromonas hydrophila subsp. hydrophila (strain ATCC 7966 / DSM 30187 / BCRC 13018 / CCUG 14551 / JCM 1027 / KCTC 2358 / NCIMB 9240 / NCTC 8049) protein is 23S rRNA (uracil(1939)-C(5))-methyltransferase RlmD.